We begin with the raw amino-acid sequence, 147 residues long: Glucosamine 6-phosphate N-acetyltransferase (147 aa).

Positions 7 to 147 (LELRVLEESD…AHERQMRLDL (141 aa)) constitute an N-acetyltransferase domain. D-glucosamine 6-phosphate contacts are provided by residues Thr28 and 86-88 (EDV). Acetyl-CoA contacts are provided by residues 88–90 (VVV) and 96–101 (GAGLGK). Residues 117-118 (YK) and Asp122 contribute to the D-glucosamine 6-phosphate site. Position 131 to 133 (131 to 133 (YEK)) interacts with acetyl-CoA.

The protein belongs to the acetyltransferase family. GNA1 subfamily. Homodimer. Post-translationally, contains poly-N-acetyllactosamines.

It localises to the glycosome. It carries out the reaction D-glucosamine 6-phosphate + acetyl-CoA = N-acetyl-D-glucosamine 6-phosphate + CoA + H(+). Its pathway is nucleotide-sugar biosynthesis; UDP-N-acetyl-alpha-D-glucosamine biosynthesis; N-acetyl-alpha-D-glucosamine 1-phosphate from alpha-D-glucosamine 6-phosphate (route I): step 1/2. In terms of biological role, involved in the biosynthesis of UDP-N-acetyl-alpha-D-glucosamine. Catalyzes the formation of N-acetyl-D-glucosamine 6-phosphate from acetyl-coenzyme A (acetyl-CoA) and D-glucosamine 6-phosphate. The polypeptide is Glucosamine 6-phosphate N-acetyltransferase (Trypanosoma brucei brucei).